We begin with the raw amino-acid sequence, 960 residues long: MQPDRSFQSFASRYRQSSFTYDVKRDVYNEENFQQEHRKKTASSGNVDIDISTVSHHVQCRCSWHKFRRCLLTVFPFLEWMCFYRFKDWLLGDLLAGISVGLVQIPQVLMLGLLARHLIPPLNVSYAAFCASVIYGIFGSCHQMSIGTFFLVSALAINVLRTQPFNRGHLLLGTFIQADFSNTSFYENYNRSLSSVASVTLLTGIIQLSMGMLGFGFIVAYIPEAAISAYLAATALHVMLSQLTCIFGIMISYNSGPIAFFYNIINYCLGLPKANSTSILLFLTAMVALRINKCIRISFNEYPIEFPMEVFLVLGFAAFSNKVNMATENSLMLMEMIPYSFLFPVTPDMSNLTEVLIESFSLALVSSSLLVFLGKKIASFHNYDVNSNQDLIAIGLCNVVSSFFRSYVFTGAVARTIIQDKTGGRQQFASLVGAGIMLLLMMKMARFFYRLPNAIVAGIILSNVLPYLEAVYTLPSLWRQNQYDCLIWMVTFMSAILLGLDIGLVVAVTFAFFIITVQSHRTKILLLGQIPNTNIYRSFQDYREVANIPGVKIFQCCNAITFVNVHYLKRKVLEEIEMVKMPLTEEEIYTLFSQNEEGAQRGKICRCYCNCDEPEPSPRVIYTERYEVQRGRESSFINLVRCSRFESMNTAQTMSEDQVPYITSSSSQRNPNYEEVEKVWLSDDPSRSMTITLPEASDTQVRATKLLPYSTSTILPSIHTIILDFSMVHLVDARALVVLRQMFSAFQNANILVLIAGCHSFVVRSLEKNDFFDAGITKAQLFLTLHDAVLFALSRKLPESSELSVDESETVIQETFSETDKKEESRHKTNRSLIEAPRSKSPGFSLLPDPEMEEESDLDLYSTIQMSKDHGLDLDLDLDREVEPESELEPESELDQETELEPEPEASPKPNRQKYWSLFRAIIPRSPTQTQARTQSVDRRHQNVKPYTSKADTSEDALEI.

Residues methionine 1–aspartate 93 are Cytoplasmic-facing. Residues leucine 94–leucine 114 form a helical membrane-spanning segment. Residues alanine 115–histidine 117 lie on the Extracellular side of the membrane. Residues leucine 118–phenylalanine 138 traverse the membrane as a helical segment. Position 139 (glycine 139) is a topological domain, cytoplasmic. The helical transmembrane segment at serine 140 to leucine 160 threads the bilayer. Over arginine 161–leucine 201 the chain is Extracellular. An N-linked (GlcNAc...) asparagine glycan is attached at asparagine 190. A run of 2 helical transmembrane segments spans residues leucine 202–isoleucine 222 and proline 223–leucine 243. Residues threonine 244 to cysteine 268 are Cytoplasmic-facing. The helical transmembrane segment at leucine 269–leucine 289 threads the bilayer. The Extracellular segment spans residues arginine 290–threonine 353. Residues glutamate 354–glycine 374 traverse the membrane as a helical segment. The Cytoplasmic portion of the chain corresponds to lysine 375–aspartate 390. A helical membrane pass occupies residues leucine 391–glycine 411. Residues alanine 412–glutamine 427 lie on the Extracellular side of the membrane. A helical membrane pass occupies residues phenylalanine 428 to phenylalanine 448. Residues tyrosine 449 to asparagine 453 are Cytoplasmic-facing. A helical transmembrane segment spans residues alanine 454–leucine 474. At proline 475 to serine 494 the chain is on the extracellular side. A helical transmembrane segment spans residues alanine 495 to isoleucine 515. At threonine 516–isoleucine 960 the chain is on the cytoplasmic side. An STAS domain is found at aspartate 541–alanine 792. An interaction with RACGAP1 region spans residues isoleucine 662–alanine 957. 2 disordered regions span residues glutamate 807 to aspartate 857 and glutamate 881 to isoleucine 960. Residues glutamate 818–histidine 827 show a composition bias toward basic and acidic residues. The span at proline 884 to proline 904 shows a compositional bias: acidic residues. Polar residues predominate over residues serine 926–glutamine 935.

Belongs to the SLC26A/SulP transporter (TC 2.A.53) family. Interacts with RACGAP1. Interacts with CFTR; stimulates anion transport activity of CFTR. N-glycosylated.

It localises to the membrane. It carries out the reaction sulfate(out) + chloride(in) = sulfate(in) + chloride(out). It catalyses the reaction oxalate(in) + chloride(out) = oxalate(out) + chloride(in). In terms of biological role, antiporter that mediates the exchange of sulfate and oxalate against chloride ions across a membrane. Stimulates anion transport activity of CFTR. May cooperate with CFTR in the regulation of chloride and bicarbonate ions fluxes required for activation of the ADCY10/PKA pathway during sperm motility and sperm capacitation. May play a role in sperm tail differentiation and motility and hence male fertility. The protein is Testis anion transporter 1 of Bos taurus (Bovine).